A 236-amino-acid polypeptide reads, in one-letter code: Exotoxin type H (236 aa).

The N-terminal stretch at 1–32 is a signal peptide; the sequence is MRYNCRYSHIDKKIYSMIICLSFLLYSNVVQA.

It belongs to the staphylococcal/streptococcal toxin family.

It localises to the secreted. Its function is as follows. Mitogenic for human peripheral blood lymphocytes. This is Exotoxin type H (speH) from Streptococcus pyogenes serotype M1.